We begin with the raw amino-acid sequence, 53 residues long: 20 kDa chaperonin (53 aa).

2 cpn-10 domain regions span residues 1–10 (YTSIKPLGDR) and 11–53 (VAEA…KITP).

It belongs to the GroES chaperonin family. Forms stable complexes with cpn60 in the presence of ATP. Homotetramer.

Its subcellular location is the plastid. It localises to the chloroplast. Seems to function only as a co-chaperone, along with cpn60, and in certain cases is essential for the discharge of biologically active proteins from cpn60. The sequence is that of 20 kDa chaperonin from Populus euphratica (Euphrates poplar).